Reading from the N-terminus, the 618-residue chain is uncharacterized protein (618 aa).

Disordered stretches follow at residues 70-118 (SSEY…SLPR), 330-352 (LTAR…EVPC), 456-552 (TLPV…PILT), and 587-618 (IPSD…LKTL). Composition is skewed to basic and acidic residues over residues 74–84 (KGTRRDSRGYE) and 333–343 (RTEEEPERHVP). Residues 463 to 481 (TSRPQSPSSLSSKTTGLPL) show a composition bias toward low complexity. Polar residues-rich tracts occupy residues 485–516 (KPTS…NSLM) and 609–618 (SDPSHSLKTL).

This is an uncharacterized protein from Danio rerio (Zebrafish).